A 92-amino-acid polypeptide reads, in one-letter code: Small ribosomal subunit protein uS19 (92 aa).

It belongs to the universal ribosomal protein uS19 family.

In terms of biological role, protein S19 forms a complex with S13 that binds strongly to the 16S ribosomal RNA. This is Small ribosomal subunit protein uS19 from Yersinia pestis (strain Pestoides F).